Consider the following 319-residue polypeptide: ATP-dependent 6-phosphofructokinase (319 aa).

Glycine 11 is an ATP binding site. 21–25 (RAVVR) provides a ligand contact to ADP. ATP is bound by residues 72-73 (RC) and 102-105 (GDGS). A Mg(2+)-binding site is contributed by aspartate 103. A substrate-binding site is contributed by 125–127 (TID). Aspartate 127 functions as the Proton acceptor in the catalytic mechanism. Arginine 154 is a binding site for ADP. Substrate contacts are provided by residues arginine 162 and 169–171 (MGR). ADP-binding positions include 185–187 (GAE), arginine 211, and 213–215 (KLH). Substrate is bound by residues glutamate 222, arginine 243, and 249–252 (HIQR).

This sequence belongs to the phosphofructokinase type A (PFKA) family. ATP-dependent PFK group I subfamily. Prokaryotic clade 'B1' sub-subfamily. Homotetramer. It depends on Mg(2+) as a cofactor.

The protein resides in the cytoplasm. It carries out the reaction beta-D-fructose 6-phosphate + ATP = beta-D-fructose 1,6-bisphosphate + ADP + H(+). Its pathway is carbohydrate degradation; glycolysis; D-glyceraldehyde 3-phosphate and glycerone phosphate from D-glucose: step 3/4. Allosterically activated by ADP and other diphosphonucleosides, and allosterically inhibited by phosphoenolpyruvate. Functionally, catalyzes the phosphorylation of D-fructose 6-phosphate to fructose 1,6-bisphosphate by ATP, the first committing step of glycolysis. This chain is ATP-dependent 6-phosphofructokinase, found in Alkaliphilus metalliredigens (strain QYMF).